The following is a 428-amino-acid chain: Histidine--tRNA ligase (428 aa).

The protein belongs to the class-II aminoacyl-tRNA synthetase family. As to quaternary structure, homodimer.

It is found in the cytoplasm. The enzyme catalyses tRNA(His) + L-histidine + ATP = L-histidyl-tRNA(His) + AMP + diphosphate + H(+). This Lactobacillus johnsonii (strain CNCM I-12250 / La1 / NCC 533) protein is Histidine--tRNA ligase.